Here is a 257-residue protein sequence, read N- to C-terminus: UPF0246 protein Shew185_1115 (257 aa).

This sequence belongs to the UPF0246 family.

This chain is UPF0246 protein Shew185_1115, found in Shewanella baltica (strain OS185).